A 295-amino-acid chain; its full sequence is Protoheme IX farnesyltransferase (295 aa).

9 consecutive transmembrane segments (helical) span residues 7-27, 34-54, 78-98, 106-126, 131-151, 161-181, 207-227, 228-248, and 263-283; these read VTKP…FLLA, VPLF…GCVF, LIAP…GIAL, LAAL…SLYM, VYGT…GYCA, LILL…IAIF, ITLY…GGYA, GYKY…MALS, and LFMF…VDFQ.

This sequence belongs to the UbiA prenyltransferase family. Protoheme IX farnesyltransferase subfamily.

It localises to the cell inner membrane. The catalysed reaction is heme b + (2E,6E)-farnesyl diphosphate + H2O = Fe(II)-heme o + diphosphate. Its pathway is porphyrin-containing compound metabolism; heme O biosynthesis; heme O from protoheme: step 1/1. Converts heme B (protoheme IX) to heme O by substitution of the vinyl group on carbon 2 of heme B porphyrin ring with a hydroxyethyl farnesyl side group. This is Protoheme IX farnesyltransferase from Aeromonas salmonicida (strain A449).